We begin with the raw amino-acid sequence, 208 residues long: Sexual inducer glycoprotein (208 aa).

The N-terminal stretch at 1–11 (MAVVVVNSATA) is a signal peptide. 6 N-linked (GlcNAc...) asparagine glycosylation sites follow: N89, N119, N131, N139, N146, and N188.

Its function is as follows. The sexual inducer is a glycoprotein synthesized and released by sexual males at about the time they release sperm packets. It is one of the most potent biological effector molecules known: it exhibits full effectiveness in converting asexually growing males and females to the sexual pathway at about 10(-7) m. The polypeptide is Sexual inducer glycoprotein (Volvox carteri (Green alga)).